A 184-amino-acid polypeptide reads, in one-letter code: ATP synthase subunit b, chloroplastic (184 aa).

The chain crosses the membrane as a helical span at residues 26–48 (ILATNLINLSVVLGVLIFFGKGV).

Belongs to the ATPase B chain family. As to quaternary structure, F-type ATPases have 2 components, F(1) - the catalytic core - and F(0) - the membrane proton channel. F(1) has five subunits: alpha(3), beta(3), gamma(1), delta(1), epsilon(1). F(0) has four main subunits: a(1), b(1), b'(1) and c(10-14). The alpha and beta chains form an alternating ring which encloses part of the gamma chain. F(1) is attached to F(0) by a central stalk formed by the gamma and epsilon chains, while a peripheral stalk is formed by the delta, b and b' chains.

It is found in the plastid. The protein resides in the chloroplast thylakoid membrane. Functionally, f(1)F(0) ATP synthase produces ATP from ADP in the presence of a proton or sodium gradient. F-type ATPases consist of two structural domains, F(1) containing the extramembraneous catalytic core and F(0) containing the membrane proton channel, linked together by a central stalk and a peripheral stalk. During catalysis, ATP synthesis in the catalytic domain of F(1) is coupled via a rotary mechanism of the central stalk subunits to proton translocation. In terms of biological role, component of the F(0) channel, it forms part of the peripheral stalk, linking F(1) to F(0). This chain is ATP synthase subunit b, chloroplastic, found in Acorus calamus (Sweet flag).